Here is a 2645-residue protein sequence, read N- to C-terminus: Non-reducing polyketide synthase AC (2645 aa).

The interval 73 to 2366 is N-terminal acylcarrier protein transacylase domain (SAT); sequence ALQNLNEWLK…TDIVHNAWPM (2294 aa). Catalysis depends on His-260, which acts as the Proton donor/acceptor; for transacylase activity. In terms of domain architecture, Ketosynthase family 3 (KS3) spans 416–834; it reads DDKIAVIGMA…GSNSSLVVTE (419 aa). Active-site for beta-ketoacyl synthase activity residues include Cys-583, His-718, and His-757. Positions 943–1252 are malonyl-CoA:ACP transacylase (MAT) domain; it reads CFGGQISTYI…HAVSITTDKS (310 aa). Residues 1324–1457 form an N-terminal hotdog fold region; sequence SKGFTSFAGY…GVCSFCSATD (134 aa). Residues 1324–1637 form the PKS/mFAS DH domain; sequence SKGFTSFAGY…YNKVPLPVMR (314 aa). A product template (PT) domain region spans residues 1330-1641; the sequence is FAGYIDGNQR…PLPVMRGILG (312 aa). His-1359 functions as the Proton acceptor; for dehydratase activity in the catalytic mechanism. A C-terminal hotdog fold region spans residues 1487–1637; it reads NIMQGTANIY…YNKVPLPVMR (151 aa). Asp-1542 acts as the Proton donor; for dehydratase activity in catalysis. Over residues 1684 to 1696 the composition is skewed to polar residues; it reads NGTTGTENPQIKS. The disordered stretch occupies residues 1684-1716; it reads NGTTGTENPQIKSKTNKVKKVPTRKSGGSDLET. Positions 1697 to 1706 are enriched in basic residues; sequence KTNKVKKVPT. In terms of domain architecture, Carrier spans 1711–1788; that stretch reads GSDLETPAKT…SLVKYIREIR (78 aa). Position 1748 is an O-(pantetheine 4'-phosphoryl)serine (Ser-1748). Positions 1794–1805 are enriched in acidic residues; that stretch reads QNVDDSESESEE. The disordered stretch occupies residues 1794-1816; the sequence is QNVDDSESESEELQQQATPIDSA. The active-site For methyltransferase activity is Tyr-2009. A methyltransferase (CMeT) domain region spans residues 2023-2197; the sequence is EVFVEKIGSS…SVGYGHVDWT (175 aa). The segment at 2269-2573 is NADPH-binding (R) domain; it reads CVLITGATGS…NIIPFYDWVQ (305 aa).

It participates in mycotoxin biosynthesis. Its function is as follows. Non-reducing polyketide synthase; part of the gene cluster that mediates the biosynthesis of the selective antifungal agent ascochitine, an o-quinone methide that plays a possible protective role against other microbial competitors in nature and is considered to be important for pathogenicity of legume-associated Didymella species. The pathway probably begins with the synthesis of a keto-aldehyde intermediate by the ascochitine non-reducing polyketide synthase pksAC from successive condensations of 4 malonyl-CoA units, presumably with a simple acetyl-CoA starter unit. Release of the keto-aldehyde intermediate is consistent with the presence of the C-terminal reductive release domain. The HR-PKS (orf7) probably makes a diketide starter unit which is passed to the non-reducing polyketide synthase pksAC for further extension, producing ascochital and ascochitine. The aldehyde dehydrogenase (orf1), the 2-oxoglutarate-dependent dioxygenase (orf3) and the dehydrogenase (orf9) are probably involved in subsequent oxidations of methyl groups to the carboxylic acid of the heterocyclic ring. The ascochitine gene cluster also includes a gene encoding a short peptide (orf2) that is often found in secondary metabolite gene clusters and which function has still to be determined. This chain is Non-reducing polyketide synthase AC, found in Didymella fabae (Leaf and pod spot disease fungus).